The following is a 148-amino-acid chain: Lysozyme C-2 (148 aa).

Residues 1–18 (MKTLLTLGLLLLSVTAQA) form the signal peptide. Positions 19 to 148 (KVYERCEFAR…LSQYIRNCGV (130 aa)) constitute a C-type lysozyme domain. 4 cysteine pairs are disulfide-bonded: C24–C146, C48–C134, C83–C99, and C95–C113. Catalysis depends on residues E53 and D71.

It belongs to the glycosyl hydrolase 22 family. Monomer. In terms of tissue distribution, expressed weakly in myeloblasts, moderately in immature macrophages, and strongly in both mature macrophages and macrophage-rich tissues.

It localises to the secreted. It carries out the reaction Hydrolysis of (1-&gt;4)-beta-linkages between N-acetylmuramic acid and N-acetyl-D-glucosamine residues in a peptidoglycan and between N-acetyl-D-glucosamine residues in chitodextrins.. In terms of biological role, lysozymes have primarily a bacteriolytic function; those in tissues and body fluids are associated with the monocyte-macrophage system and enhance the activity of immunoagents. Lyz2 is active against a range of Gram-positive and Gram-negative bacteria. More effective than Lyz1 in killing Gram-negative bacteria. Lyz1 and Lyz2 are equally effective in killing Gram-positive bacteria. This Mus musculus (Mouse) protein is Lysozyme C-2 (Lyz2).